The primary structure comprises 390 residues: UPF0229 protein ABC1477 (390 aa).

2 disordered regions span residues 1–31 (MEKD…RHQE) and 81–118 (VGQG…QAGE). Positions 7–16 (RQFTISQENW) are enriched in polar residues. Composition is skewed to basic and acidic residues over residues 22–31 (GFQDQRRHQE) and 86–100 (GDSK…DPNG).

It belongs to the UPF0229 family.

The polypeptide is UPF0229 protein ABC1477 (Shouchella clausii (strain KSM-K16) (Alkalihalobacillus clausii)).